Reading from the N-terminus, the 827-residue chain is Putative potassium transporter 12 (827 aa).

Positions Met-1–Val-31 are disordered. Residues Met-1 to Asp-82 lie on the Cytoplasmic side of the membrane. The chain crosses the membrane as a helical span at residues Leu-83 to Met-103. At Gly-104–Ala-129 the chain is on the extracellular side. A helical membrane pass occupies residues Leu-130–Leu-150. Residues Lys-151–Thr-216 are Cytoplasmic-facing. The chain crosses the membrane as a helical span at residues Leu-217–Pro-237. The Extracellular portion of the chain corresponds to Ala-238–Lys-253. Residues Gly-254–Ile-274 form a helical membrane-spanning segment. Residues Gln-275–Lys-281 are Cytoplasmic-facing. A helical membrane pass occupies residues Val-282–Ile-302. Residues Tyr-303–Ala-335 are Extracellular-facing. Residues Leu-336–Phe-356 form a helical membrane-spanning segment. Residues Ser-357–Met-363 are Cytoplasmic-facing. Residues Ala-364 to Leu-384 form a helical membrane-spanning segment. At Thr-385–Ser-402 the chain is on the extracellular side. The helical transmembrane segment at Leu-403–Ile-423 threads the bilayer. The Cytoplasmic segment spans residues Ser-424–Gln-454. Residues Ile-455 to Phe-475 form a helical membrane-spanning segment. At Arg-476–His-480 the chain is on the extracellular side. 2 helical membrane-spanning segments follow: residues Ile-481–Thr-501 and Leu-502–Phe-522. Residues Gly-523–Lys-536 are Extracellular-facing. Residues Ile-537 to Ile-557 traverse the membrane as a helical segment. Topologically, residues Trp-558–Val-827 are cytoplasmic. Residues Arg-728–Glu-750 are disordered. The span at Glu-738–Ser-748 shows a compositional bias: low complexity.

This sequence belongs to the HAK/KUP transporter (TC 2.A.72.3) family.

The protein resides in the cell membrane. Putative potassium transporter. The polypeptide is Putative potassium transporter 12 (POT12) (Arabidopsis thaliana (Mouse-ear cress)).